Consider the following 913-residue polypeptide: Translation initiation factor IF-2 (913 aa).

The segment at 1–322 (MTDNNDDKTL…QEKFRRSQMQ (322 aa)) is disordered. A compositionally biased stretch (low complexity) spans 60-113 (VQPVVAAPKPAAPAPVAARPQAPQPRIHQPGGQQQRPGSSQSQQRSGSSAPQQR). Residues 131 to 180 (MEARRRALMEAQARDVVEAKQRAEDEARRKVEEEQRIAAEKMEAANRAAE) are compositionally biased toward basic and acidic residues. Low complexity-rich tracts occupy residues 181-195 (EAAA…PAAE), 203-238 (ERPA…AAAP), and 261-277 (PARG…PAAR). Residues 411 to 578 (SRPPVVTIMG…AILLQAEILD (168 aa)) enclose the tr-type G domain. The interval 420 to 427 (GHVDHGKT) is G1. 420 to 427 (GHVDHGKT) is a binding site for GTP. The segment at 445–449 (GITQH) is G2. The segment at 466–469 (DTPG) is G3. GTP contacts are provided by residues 466–470 (DTPGH) and 520–523 (NKID). Residues 520-523 (NKID) are G4. Positions 556-558 (SAK) are G5.

The protein belongs to the TRAFAC class translation factor GTPase superfamily. Classic translation factor GTPase family. IF-2 subfamily.

It localises to the cytoplasm. Its function is as follows. One of the essential components for the initiation of protein synthesis. Protects formylmethionyl-tRNA from spontaneous hydrolysis and promotes its binding to the 30S ribosomal subunits. Also involved in the hydrolysis of GTP during the formation of the 70S ribosomal complex. The protein is Translation initiation factor IF-2 of Agrobacterium fabrum (strain C58 / ATCC 33970) (Agrobacterium tumefaciens (strain C58)).